Consider the following 227-residue polypeptide: Cytochrome c oxidase subunit 2 (227 aa).

The Mitochondrial intermembrane segment spans residues 1–14; the sequence is MAYPLQLGLQDATS. The helical transmembrane segment at 15–45 threads the bilayer; that stretch reads PIMEELMNFHDHTLMIVFLISSLVLYVISSM. Topologically, residues 46–59 are mitochondrial matrix; it reads LTTKLTHTSTMDAQ. Residues 60-87 traverse the membrane as a helical segment; sequence EVETIWTILPAVILIMIALPSLRILYMM. At 88 to 227 the chain is on the mitochondrial intermembrane side; the sequence is DEINNPVLTV…NFETWSVSMI (140 aa). Residues histidine 161, cysteine 196, glutamate 198, cysteine 200, histidine 204, and methionine 207 each contribute to the Cu cation site. Glutamate 198 contributes to the Mg(2+) binding site.

Belongs to the cytochrome c oxidase subunit 2 family. Component of the cytochrome c oxidase (complex IV, CIV), a multisubunit enzyme composed of 14 subunits. The complex is composed of a catalytic core of 3 subunits MT-CO1, MT-CO2 and MT-CO3, encoded in the mitochondrial DNA, and 11 supernumerary subunits COX4I, COX5A, COX5B, COX6A, COX6B, COX6C, COX7A, COX7B, COX7C, COX8 and NDUFA4, which are encoded in the nuclear genome. The complex exists as a monomer or a dimer and forms supercomplexes (SCs) in the inner mitochondrial membrane with NADH-ubiquinone oxidoreductase (complex I, CI) and ubiquinol-cytochrome c oxidoreductase (cytochrome b-c1 complex, complex III, CIII), resulting in different assemblies (supercomplex SCI(1)III(2)IV(1) and megacomplex MCI(2)III(2)IV(2)). Found in a complex with TMEM177, COA6, COX18, COX20, SCO1 and SCO2. Interacts with TMEM177 in a COX20-dependent manner. Interacts with COX20. Interacts with COX16. Cu cation is required as a cofactor.

The protein localises to the mitochondrion inner membrane. The catalysed reaction is 4 Fe(II)-[cytochrome c] + O2 + 8 H(+)(in) = 4 Fe(III)-[cytochrome c] + 2 H2O + 4 H(+)(out). Component of the cytochrome c oxidase, the last enzyme in the mitochondrial electron transport chain which drives oxidative phosphorylation. The respiratory chain contains 3 multisubunit complexes succinate dehydrogenase (complex II, CII), ubiquinol-cytochrome c oxidoreductase (cytochrome b-c1 complex, complex III, CIII) and cytochrome c oxidase (complex IV, CIV), that cooperate to transfer electrons derived from NADH and succinate to molecular oxygen, creating an electrochemical gradient over the inner membrane that drives transmembrane transport and the ATP synthase. Cytochrome c oxidase is the component of the respiratory chain that catalyzes the reduction of oxygen to water. Electrons originating from reduced cytochrome c in the intermembrane space (IMS) are transferred via the dinuclear copper A center (CU(A)) of subunit 2 and heme A of subunit 1 to the active site in subunit 1, a binuclear center (BNC) formed by heme A3 and copper B (CU(B)). The BNC reduces molecular oxygen to 2 water molecules using 4 electrons from cytochrome c in the IMS and 4 protons from the mitochondrial matrix. The sequence is that of Cytochrome c oxidase subunit 2 (MT-CO2) from Malacothrix typica (Long-eared mouse).